A 152-amino-acid polypeptide reads, in one-letter code: Aspartate 1-decarboxylase (152 aa).

The active-site Schiff-base intermediate with substrate; via pyruvic acid is the Ser-24. Ser-24 carries the post-translational modification Pyruvic acid (Ser). Substrate is bound at residue Thr-56. Residue Tyr-57 is the Proton donor of the active site. Gly-72–Ala-74 is a binding site for substrate.

Belongs to the PanD family. Heterooctamer of four alpha and four beta subunits. The cofactor is pyruvate. Post-translationally, is synthesized initially as an inactive proenzyme, which is activated by self-cleavage at a specific serine bond to produce a beta-subunit with a hydroxyl group at its C-terminus and an alpha-subunit with a pyruvoyl group at its N-terminus.

It is found in the cytoplasm. The catalysed reaction is L-aspartate + H(+) = beta-alanine + CO2. The protein operates within cofactor biosynthesis; (R)-pantothenate biosynthesis; beta-alanine from L-aspartate: step 1/1. Catalyzes the pyruvoyl-dependent decarboxylation of aspartate to produce beta-alanine. This is Aspartate 1-decarboxylase from Rhodospirillum centenum (strain ATCC 51521 / SW).